A 206-amino-acid polypeptide reads, in one-letter code: Pyridoxine/pyridoxamine 5'-phosphate oxidase (206 aa).

FMN-binding positions include 53 to 58, 68 to 69, Lys-75, and Gln-97; these read RMVLLK and YT. Lys-58 provides a ligand contact to substrate. Positions 115, 119, and 123 each coordinate substrate. Residues 132 to 133 and Trp-177 contribute to the FMN site; that span reads QS. 183 to 185 is a binding site for substrate; sequence RLH. Arg-187 serves as a coordination point for FMN.

It belongs to the pyridoxamine 5'-phosphate oxidase family. In terms of assembly, homodimer. FMN serves as cofactor.

The enzyme catalyses pyridoxamine 5'-phosphate + O2 + H2O = pyridoxal 5'-phosphate + H2O2 + NH4(+). It carries out the reaction pyridoxine 5'-phosphate + O2 = pyridoxal 5'-phosphate + H2O2. It functions in the pathway cofactor metabolism; pyridoxal 5'-phosphate salvage; pyridoxal 5'-phosphate from pyridoxamine 5'-phosphate: step 1/1. Its pathway is cofactor metabolism; pyridoxal 5'-phosphate salvage; pyridoxal 5'-phosphate from pyridoxine 5'-phosphate: step 1/1. Its function is as follows. Catalyzes the oxidation of either pyridoxine 5'-phosphate (PNP) or pyridoxamine 5'-phosphate (PMP) into pyridoxal 5'-phosphate (PLP). The chain is Pyridoxine/pyridoxamine 5'-phosphate oxidase from Rhizobium johnstonii (strain DSM 114642 / LMG 32736 / 3841) (Rhizobium leguminosarum bv. viciae).